Here is a 471-residue protein sequence, read N- to C-terminus: Phosphatidylinositol 4-kinase type 2-alpha (471 aa).

Disordered regions lie at residues 1–25 and 48–101; these read MDETSPLVSPDRDQTDYSYQSQCSP and PGSA…PDDP. The segment covering 90-101 has biased composition (basic and acidic residues); the sequence is AERERNKFPDDP. The region spanning 117–445 is the PI3K/PI4K catalytic domain; it reads DILPERISQG…VQTPPVIVET (329 aa). The interval 123 to 129 is G-loop; the sequence is ISQGSSG. ATP-binding positions include 124-130 and lysine 145; that span reads SQGSSGS. The interval 150–152 is important for substrate binding; it reads EPY. The important for interaction with membranes stretch occupies residues 158–171; that stretch reads KWTKWLQKLCCPCC. Residues cysteine 167, cysteine 168, cysteine 170, and cysteine 171 are each lipidated (S-palmitoyl cysteine). 254-257 lines the ATP pocket; sequence QLFV. The interval 261 to 269 is important for interaction with membranes; the sequence is KDADYWLRR. The interval 298–306 is catalytic loop; the sequence is RNTDRGNDN. Residues 336-356 form an activation loop region; the sequence is AIDNGLAFPLKHPDSWRAYPF. Aspartate 338 lines the ATP pocket. The segment at 351–360 is important for interaction with membranes; that stretch reads WRAYPFYWAW.

The protein belongs to the PI3/PI4-kinase family. Type II PI4K subfamily.

It localises to the golgi apparatus. It is found in the trans-Golgi network membrane. Its subcellular location is the membrane raft. The protein localises to the endosome. The protein resides in the endosome membrane. It localises to the cytoplasmic vesicle. It is found in the cell projection. Its subcellular location is the dendrite. The protein localises to the presynaptic cell membrane. The protein resides in the synapse. It localises to the synaptosome. It is found in the mitochondrion. Its subcellular location is the membrane. The protein localises to the cell membrane. The protein resides in the perikaryon. It localises to the neuron projection. It catalyses the reaction a 1,2-diacyl-sn-glycero-3-phospho-(1D-myo-inositol) + ATP = a 1,2-diacyl-sn-glycero-3-phospho-(1D-myo-inositol 4-phosphate) + ADP + H(+). In terms of biological role, membrane-bound phosphatidylinositol-4 kinase (PI4-kinase) that catalyzes the phosphorylation of phosphatidylinositol (PI) to phosphatidylinositol 4-phosphate (PI4P), a lipid that plays important roles in endocytosis, Golgi function, protein sorting and membrane trafficking. Besides, phosphorylation of phosphatidylinositol (PI) to phosphatidylinositol 4-phosphate (PI4P) is the first committed step in the generation of phosphatidylinositol 4,5-bisphosphate (PIP2), a precursor of the second messenger inositol 1,4,5-trisphosphate (InsP3). The chain is Phosphatidylinositol 4-kinase type 2-alpha (pi4k2a) from Xenopus tropicalis (Western clawed frog).